The primary structure comprises 263 residues: ATP synthase subunit a (263 aa).

The propeptide at 1-14 (MYLNNNNNMKYYIN) is removed in mature form. A run of 6 helical transmembrane segments spans residues 35 to 57 (FSFI…ILTM), 95 to 117 (VWGY…NLIS), 129 to 151 (VVFV…FYTH), 156 to 178 (FGLF…IELL), 191 to 213 (LSAN…FNLM), and 228 to 250 (IAIL…VWCI).

Belongs to the ATPase A chain family. F-type ATPases have 2 components, CF(1) - the catalytic core - and CF(0) - the membrane proton channel. In yeast, the dimeric form of ATP synthase consists of 18 polypeptides: alpha, beta, gamma, delta, epsilon, 4 (B), 5 (OSCP), 6 (A), 8, 9 (C), d, E (Tim11), f, g, h, i, j and k.

Its subcellular location is the mitochondrion inner membrane. Functionally, mitochondrial membrane ATP synthase (F(1)F(0) ATP synthase or Complex V) produces ATP from ADP in the presence of a proton gradient across the membrane which is generated by electron transport complexes of the respiratory chain. F-type ATPases consist of two structural domains, F(1) - containing the extramembraneous catalytic core and F(0) - containing the membrane proton channel, linked together by a central stalk and a peripheral stalk. During catalysis, ATP synthesis in the catalytic domain of F(1) is coupled via a rotary mechanism of the central stalk subunits to proton translocation. Key component of the proton channel; it may play a direct role in the translocation of protons across the membrane. The protein is ATP synthase subunit a (ATP6) of Eremothecium gossypii (strain ATCC 10895 / CBS 109.51 / FGSC 9923 / NRRL Y-1056) (Yeast).